A 41-amino-acid polypeptide reads, in one-letter code: Minor histocompatibility protein HB-1 (41 aa).

The loss of recognition by cytotoxic T lymphocyte (CTL) stretch occupies residues 9–17 (EEKRGSLHV).

In terms of assembly, HB-1 forms a complex with MHC class I HLA-B44. In terms of tissue distribution, expressed in acute lymphoblastic leukemia B-cells and Epstein-Barr virus-transformed B-cells.

In terms of biological role, precursor of the histocomplatibility antigen HB-1. More generally, minor histocomplatibility antigens (mHags) refer to immunogenic peptide which, when complexed with MHC, can generate an immune response after recognition by specific T-cells. The peptides are derived from polymorphic intracellular proteins, which are cleaved by normal pathways of antigen processing. The binding of these peptides to MHC class I or class II molecules and its expression on the cell surface can stimulate T-cell responses and thereby trigger graft rejection or graft-versus-host disease (GVHD) after hematopoietic stem cell transplantation from HLA-identical sibling donor. GVHD is a frequent complication after bone marrow transplantation (BMT), due to mismatch of minor histocomplatibility antigen in HLA-matched sibling marrow transplants. HB-1 is presented on the cell surface by MHC class I HLA-B44. This complex specifically elicits donor-cytotoxic T lymphocyte (CTL) reactivity in B-cell acute lymphoblastic leukemia (B-ALL) after treatment by HLA-identical allogenic bone marrow transplantation (BMT). It induces cell recognition and lysis by CTL. However, HB-1 restricted expression in B-ALL cells and not in normal tissues may allow a specific CTL reactivity against B-ALL without the risk of evoking graft-versus-host disease. This Homo sapiens (Human) protein is Minor histocompatibility protein HB-1 (HMHB1).